Reading from the N-terminus, the 1619-residue chain is ATP-dependent helicase ULS1 (1619 aa).

The SUMO interacting motif; type a 1 signature appears at 7-10 (IDLT). The segment covering 86–102 (STFNNEKSSNEVKQQQV) has biased composition (polar residues). Disordered stretches follow at residues 86–123 (STFN…SSPS), 200–279 (NNKP…VESS), 347–371 (PILP…NSSI), and 429–450 (SGSN…SVLQ). Over residues 103 to 118 (LKEETMGSSNDEKKTQ) the composition is skewed to basic and acidic residues. Position 121 is a phosphoserine (S121). A compositionally biased stretch (polar residues) spans 200 to 210 (NNKPSQQQFSD). The span at 211 to 226 (PETKDNSLKSENKDQI) shows a compositional bias: basic and acidic residues. 2 stretches are compositionally biased toward polar residues: residues 242–259 (SAFQ…TIPN) and 269–279 (LPSNLSSVESS). Basic and acidic residues predominate over residues 353 to 366 (NMDHTTHNSHDSEQ). The short motif at 371–378 (IIILSDED) is the SUMO interacting motif; type b 1 element. Positions 470–473 (LDTL) match the SUMO interacting motif; type a 2 motif. The SUMO interacting motif; type b 2 signature appears at 543 to 550 (ILVDEAEN). The Helicase ATP-binding domain maps to 956–1157 (QVENSAKKGG…YSLIRFLRIP (202 aa)). 969 to 976 (DDMGLGKT) serves as a coordination point for ATP. An RING-type zinc finger spans residues 1330–1386 (CFWCMEQLEPEAMSVLTGCGHLICDTCIEPFIEESSMLPQAKKTKGGAFAIPCKDCQ). In terms of domain architecture, Helicase C-terminal spans 1447–1606 (QCIQVIQRVF…GKIKEVNSLG (160 aa)).

Belongs to the SNF2/RAD54 helicase family. Interacts with CDC3, CDC11, EBP2, SIR4, UBC4 and SUMO/SMT3.

It localises to the nucleus. In terms of biological role, ATP-dependent helicase involved mating type switching and in silencing interference through its interaction with the silencing regulator SIR4. Cooperates with UBC4 and UBC5 to mediate ubiquitination of SUMO conjugates. The protein is ATP-dependent helicase ULS1 (ULS1) of Saccharomyces cerevisiae (strain ATCC 204508 / S288c) (Baker's yeast).